The primary structure comprises 515 residues: Fatty acyl-CoA reductase 1 (515 aa).

The Cytoplasmic segment spans residues 1 to 465 (MLSIPEFYQG…ARKHLNKLRN (465 aa)). Residues 466–484 (IRYGFNTILVVLIWRVFIA) form a helical membrane-spanning segment. Residues 485-515 (RSQMARNIWYFVVSMCFKFLSYFRASSTMRY) lie on the Peroxisomal side of the membrane.

This sequence belongs to the fatty acyl-CoA reductase family.

The protein localises to the peroxisome membrane. It carries out the reaction a long-chain fatty acyl-CoA + 2 NADPH + 2 H(+) = a long-chain primary fatty alcohol + 2 NADP(+) + CoA. The enzyme catalyses hexadecanoyl-CoA + 2 NADPH + 2 H(+) = hexadecan-1-ol + 2 NADP(+) + CoA. It catalyses the reaction octadecanoyl-CoA + 2 NADPH + 2 H(+) = octadecan-1-ol + 2 NADP(+) + CoA. The catalysed reaction is (9Z)-octadecenoyl-CoA + 2 NADPH + 2 H(+) = (9Z)-octadecen-1-ol + 2 NADP(+) + CoA. It carries out the reaction (9Z,12Z)-octadecadienoyl-CoA + 2 NADPH + 2 H(+) = (9Z,12Z)-octadecadien-1-ol + 2 NADP(+) + CoA. The enzyme catalyses eicosanoyl-CoA + 2 NADPH + 2 H(+) = eicosan-1-ol + 2 NADP(+) + CoA. It catalyses the reaction 16-methylheptadecanoyl-CoA + 2 NADPH + 2 H(+) = 16-methylheptadecan-1-ol + 2 NADP(+) + CoA. The catalysed reaction is 18-methylnonadecanoyl-CoA + 2 NADPH + 2 H(+) = 18-methylnonadecan-1-ol + 2 NADP(+) + CoA. Catalyzes the reduction of saturated and unsaturated C16 or C18 fatty acyl-CoA to fatty alcohols. It plays an essential role in the production of ether lipids/plasmalogens which synthesis requires fatty alcohols. In parallel, it is also required for wax monoesters production since fatty alcohols also constitute a substrate for their synthesis. The protein is Fatty acyl-CoA reductase 1 (far1) of Xenopus laevis (African clawed frog).